A 450-amino-acid chain; its full sequence is Equilibrative nucleotide transporter 1 (450 aa).

A run of 11 helical transmembrane segments spans residues 63–83 (FAYIIYFTLGVGFLLPWNAFI), 101–121 (IFAVIYMLVALVCLFVIVVFY), 133–153 (LGLLLFVIALLVVPVLDLVYV), 168–188 (AAVALSGLGDALMQGGLIGVA), 196–216 (MQAVVAGTAGSGVLVSLLRIL), 234–254 (LYFAVGIVVMVICAVFYNVAH), 300–320 (HGFGIVLLYMVTLSIFPGYIT), 334–354 (ILLIAAYNVFDLVGKCLTAVF), 361–381 (IAVGGSIARLLFYPLFWGCLH), 394–414 (ILTCLLGLTNGYLTSVLMILA), and 430–450 (TVMFLVVGLASGSVIAWFWVI).

Belongs to the SLC29A/ENT transporter (TC 2.A.57) family. As to expression, in young seedlings, expressed in root elongation zone, root cortex, root-hair, at the transition to the shoot and cotyledons. Expressed in hydathodes of fully developed leaves and pollen.

It is found in the vacuole membrane. In terms of biological role, nucleoside transporter involved in adenosine transport and required for nucleotide metabolism which influences growth and pollen germination. Has high affinity for adenosine when expressed in a heterologous system (yeast). In Arabidopsis thaliana (Mouse-ear cress), this protein is Equilibrative nucleotide transporter 1 (ENT1).